The chain runs to 159 residues: Transcription elongation factor GreA (159 aa).

The stretch at Ala46 to Gln73 forms a coiled coil.

This sequence belongs to the GreA/GreB family.

Necessary for efficient RNA polymerase transcription elongation past template-encoded arresting sites. The arresting sites in DNA have the property of trapping a certain fraction of elongating RNA polymerases that pass through, resulting in locked ternary complexes. Cleavage of the nascent transcript by cleavage factors such as GreA or GreB allows the resumption of elongation from the new 3'terminus. GreA releases sequences of 2 to 3 nucleotides. The polypeptide is Transcription elongation factor GreA (Vesicomyosocius okutanii subsp. Calyptogena okutanii (strain HA)).